We begin with the raw amino-acid sequence, 282 residues long: NADPH-dependent 7-cyano-7-deazaguanine reductase (282 aa).

Residue 88–90 (IES) participates in substrate binding. 90-91 (SK) provides a ligand contact to NADPH. Cys190 serves as the catalytic Thioimide intermediate. The active-site Proton donor is Asp197. Substrate is bound at residue 229 to 230 (HE). 258–259 (RG) lines the NADPH pocket.

It belongs to the GTP cyclohydrolase I family. QueF type 2 subfamily. Homodimer.

Its subcellular location is the cytoplasm. It catalyses the reaction 7-aminomethyl-7-carbaguanine + 2 NADP(+) = 7-cyano-7-deazaguanine + 2 NADPH + 3 H(+). It functions in the pathway tRNA modification; tRNA-queuosine biosynthesis. Functionally, catalyzes the NADPH-dependent reduction of 7-cyano-7-deazaguanine (preQ0) to 7-aminomethyl-7-deazaguanine (preQ1). The protein is NADPH-dependent 7-cyano-7-deazaguanine reductase of Salmonella paratyphi A (strain ATCC 9150 / SARB42).